We begin with the raw amino-acid sequence, 69 residues long: Brevinin-1CG1 (69 aa).

An N-terminal signal peptide occupies residues 1-22; the sequence is MFTMKKSLLLLFFLGTINLSLC. Positions 23–43 are cleaved as a propeptide — removed in mature form; the sequence is EQERNAEEERRDDDEMDVEVE. A disulfide bond links C63 and C69.

In terms of tissue distribution, expressed by the skin glands.

It localises to the secreted. Its function is as follows. Antimicrobial peptide. Active against Gram-positive bacteria R.rhodochrous X15 and B.licheniformis X39 and against Gram-negative bacterium E.coli ATCC 25922. Has antifungal activity against a slime mold isolate. Has weak hemolytic activity against human erythrocytes. The sequence is that of Brevinin-1CG1 from Amolops chunganensis (Chungan torrent frog).